The following is a 159-amino-acid chain: Ribosomal RNA large subunit methyltransferase H (159 aa).

Residues leucine 76, glycine 108, and 127–132 contribute to the S-adenosyl-L-methionine site; that span reads FSKMTF.

This sequence belongs to the RNA methyltransferase RlmH family. Homodimer.

The protein localises to the cytoplasm. It catalyses the reaction pseudouridine(1915) in 23S rRNA + S-adenosyl-L-methionine = N(3)-methylpseudouridine(1915) in 23S rRNA + S-adenosyl-L-homocysteine + H(+). Specifically methylates the pseudouridine at position 1915 (m3Psi1915) in 23S rRNA. The polypeptide is Ribosomal RNA large subunit methyltransferase H (Staphylococcus saprophyticus subsp. saprophyticus (strain ATCC 15305 / DSM 20229 / NCIMB 8711 / NCTC 7292 / S-41)).